Here is a 505-residue protein sequence, read N- to C-terminus: MEIRAEEISQIIKEQIKDYDKKVDLSETGTVLSVGDGIARVYGLEKAMALELVEFPGGILGLVLNLEEDNVGVAIMGEVTHIKEGDMVKRTGKIAQVPVGEAVLGRVVDGVGSPIDGKGPLDATETRMVEMVAPGVIARKSVHEPCYTGLKAVDAMTPVGRGQRELIIGDRQIGKTAVAVDAILAQKDTDIYCIYVACGQKKSTVAQVVATLEKYGAMEYTTVVSACASDPATLQYLAPYAGCAMGEYFRDKGQHALIIYDDLSKQAVAYRQISLLLRRPPGREAYPGDIFYNHSRLLERAAKVSDELGAGSLTALPIIETQAGDVSAYIPTNVISITDGQIYLEPGLFFAGVRPAINVGLSVSRVGGAAQEKAMKQVAGTLRMDLAQFRELEAFAAFGSDLDAATQKQLKRGERLVQILKQPQYAPLPLEKQVAILFAGANGFLDAFPADSMAKYEAGMYSFLESKYPDAMGAIAKERKISDETDALLKKALEEYGKEFQDTIQ.

An ATP-binding site is contributed by 169-176 (GDRQIGKT).

It belongs to the ATPase alpha/beta chains family. In terms of assembly, F-type ATPases have 2 components, CF(1) - the catalytic core - and CF(0) - the membrane proton channel. CF(1) has five subunits: alpha(3), beta(3), gamma(1), delta(1), epsilon(1). CF(0) has three main subunits: a(1), b(2) and c(9-12). The alpha and beta chains form an alternating ring which encloses part of the gamma chain. CF(1) is attached to CF(0) by a central stalk formed by the gamma and epsilon chains, while a peripheral stalk is formed by the delta and b chains.

It is found in the cell inner membrane. The catalysed reaction is ATP + H2O + 4 H(+)(in) = ADP + phosphate + 5 H(+)(out). Produces ATP from ADP in the presence of a proton gradient across the membrane. The alpha chain is a regulatory subunit. This is ATP synthase subunit alpha from Desulfatibacillum aliphaticivorans.